We begin with the raw amino-acid sequence, 37 residues long: Large ribosomal subunit protein bL36 (37 aa).

The protein belongs to the bacterial ribosomal protein bL36 family.

The polypeptide is Large ribosomal subunit protein bL36 (Staphylococcus epidermidis (strain ATCC 35984 / DSM 28319 / BCRC 17069 / CCUG 31568 / BM 3577 / RP62A)).